Reading from the N-terminus, the 364-residue chain is N-acetyl-gamma-glutamyl-phosphate reductase (364 aa).

Cysteine 157 is a catalytic residue.

This sequence belongs to the NAGSA dehydrogenase family. Type 1 subfamily.

Its subcellular location is the cytoplasm. It carries out the reaction N-acetyl-L-glutamate 5-semialdehyde + phosphate + NADP(+) = N-acetyl-L-glutamyl 5-phosphate + NADPH + H(+). It functions in the pathway amino-acid biosynthesis; L-arginine biosynthesis; N(2)-acetyl-L-ornithine from L-glutamate: step 3/4. Catalyzes the NADPH-dependent reduction of N-acetyl-5-glutamyl phosphate to yield N-acetyl-L-glutamate 5-semialdehyde. The chain is N-acetyl-gamma-glutamyl-phosphate reductase from Bifidobacterium longum (strain DJO10A).